The primary structure comprises 777 residues: Phosphoribosylformylglycinamidine synthase subunit PurL (777 aa).

Residue histidine 50 is part of the active site. Residues tyrosine 53 and lysine 92 each contribute to the ATP site. Residue glutamate 94 participates in Mg(2+) binding. Residues 95–98 (SHNH) and arginine 117 contribute to the substrate site. Histidine 96 serves as the catalytic Proton acceptor. Aspartate 118 serves as a coordination point for Mg(2+). Glutamine 241 contacts substrate. Aspartate 269 contacts Mg(2+). 313–315 (ESQ) contacts substrate. 2 residues coordinate ATP: aspartate 516 and glycine 553. Residue asparagine 554 participates in Mg(2+) binding. Serine 556 is a substrate binding site.

It belongs to the FGAMS family. As to quaternary structure, monomer. Part of the FGAM synthase complex composed of 1 PurL, 1 PurQ and 2 PurS subunits.

The protein resides in the cytoplasm. It carries out the reaction N(2)-formyl-N(1)-(5-phospho-beta-D-ribosyl)glycinamide + L-glutamine + ATP + H2O = 2-formamido-N(1)-(5-O-phospho-beta-D-ribosyl)acetamidine + L-glutamate + ADP + phosphate + H(+). It functions in the pathway purine metabolism; IMP biosynthesis via de novo pathway; 5-amino-1-(5-phospho-D-ribosyl)imidazole from N(2)-formyl-N(1)-(5-phospho-D-ribosyl)glycinamide: step 1/2. In terms of biological role, part of the phosphoribosylformylglycinamidine synthase complex involved in the purines biosynthetic pathway. Catalyzes the ATP-dependent conversion of formylglycinamide ribonucleotide (FGAR) and glutamine to yield formylglycinamidine ribonucleotide (FGAM) and glutamate. The FGAM synthase complex is composed of three subunits. PurQ produces an ammonia molecule by converting glutamine to glutamate. PurL transfers the ammonia molecule to FGAR to form FGAM in an ATP-dependent manner. PurS interacts with PurQ and PurL and is thought to assist in the transfer of the ammonia molecule from PurQ to PurL. The polypeptide is Phosphoribosylformylglycinamidine synthase subunit PurL (Synechococcus elongatus (strain ATCC 33912 / PCC 7942 / FACHB-805) (Anacystis nidulans R2)).